A 351-amino-acid polypeptide reads, in one-letter code: MAGRSSNRSIGTVAMRWHGDRLELLDQRLLPAEEHWIVADGASAVAQCITDMVVRGAPAIGISAAYGVALAARHAGGGDWQAEIKQAIRVLAKSRPTAVNLFWALERMEKVFHACHSLDEATDRLAAEAVRLHEDDLAANLAMADYALEVMNPDKPIAVLTHCNTGALATGGYGTALGVIRRLHEEKLLKRVYADETRPWLQGSRLTAWELTRDHIPVTLNADGAAAAIMASGKVKWIVVGADRITANGDVANKIGTYNLAVLARHHKIGFMVVAPSSTVDMSLESGKDIPIEEREGTEVREIRGIPLAPAGVQVFNPVFDVTPASLIDAIVTEKGAVRNPNITGMRALFT.

Substrate is bound by residues 55–57, R95, and Q202; that span reads RGA. D243 (proton donor) is an active-site residue. 253–254 is a substrate binding site; that stretch reads NK.

Belongs to the eIF-2B alpha/beta/delta subunits family. MtnA subfamily.

The catalysed reaction is 5-(methylsulfanyl)-alpha-D-ribose 1-phosphate = 5-(methylsulfanyl)-D-ribulose 1-phosphate. It functions in the pathway amino-acid biosynthesis; L-methionine biosynthesis via salvage pathway; L-methionine from S-methyl-5-thio-alpha-D-ribose 1-phosphate: step 1/6. Its function is as follows. Catalyzes the interconversion of methylthioribose-1-phosphate (MTR-1-P) into methylthioribulose-1-phosphate (MTRu-1-P). This chain is Methylthioribose-1-phosphate isomerase, found in Marinobacter nauticus (strain ATCC 700491 / DSM 11845 / VT8) (Marinobacter aquaeolei).